The chain runs to 738 residues: MRLLSVTFWLLLSLRTVVCVMEVQWCTISDAEQQKCKDMSEAFQGAGIRPSLLCVQGNSADHCVQLIKEQKADAITLDGGAIYEAGKEHGLKPVVGEVYDQDIGTSYYAVAVVRRNSNVTINTLKGVKSCHTGINRTVGWNVPVGYLVESGHLSVMGCDVLKAVGDYFGGSCVPGTGETSHSESLCRLCRGDSSGHNVCDKSPLERYYDYSGAFRCLAEGAGDVAFVKHSTVLENTDGNTLPSWGKSLMSEDFQLLCRDGSRADITEWRRCHLAKVPAHAVVVRGDMDGGLIFQLLNEGQLLFSHEDSSFQMFSSKAYSQKNLLFKDSTLELVPIATQNYEAWLGQEYLQAMKGLLCDPNRLPHYLRWCVLSAPEIQKCGDMAVAFSRQNLKPEIQCVSAESPEHCMEQIQAGHTDAVTLRGEDIYRAGKVYGLVPAAGELYAEEDRSNSYFVVAVARRDSSYSFTLDELRGKRSCHPYLGSPAGWEVPIGSLIQRGFIRPKDCDVLTAVSQFFNASCVPVNNPKNYPSALCALCVGDEKGRNKCVGSSQERYYGYSGAFRCLVEHAGDVAFVKHTTVFENTNGHNPEPWASHLRWQDYELLCPNGARAEVDQFQACNLAQMPSHAVMVRPDTNIFTVYGLLDKAQDLFGDDHNKNGFQMFDSSKYHSQDLLFKDATVRAVPVREKTTYLDWLGPDYVVALEGMLSQQCSGAGAAVQRVPLLALLLLTLAAGLLPRVL.

The N-terminal stretch at 1–19 is a signal peptide; sequence MRLLSVTFWLLLSLRTVVC. 2 Transferrin-like domains span residues 23–357 and 366–706; these read VQWC…GLLC and LRWC…GMLS. 2 cysteine pairs are disulfide-bonded: cysteine 26–cysteine 63 and cysteine 36–cysteine 54. Fe(3+) is bound by residues aspartate 78 and tyrosine 107. Residue asparagine 118 is glycosylated (N-linked (GlcNAc...) asparagine). Disulfide bonds link cysteine 130–cysteine 216, cysteine 172–cysteine 189, cysteine 186–cysteine 199, and cysteine 257–cysteine 271. Threonine 132 is a hydrogencarbonate binding site. N-linked (GlcNAc...) asparagine glycosylation occurs at asparagine 135. Hydrogencarbonate contacts are provided by arginine 136, valine 138, and glycine 139. Tyrosine 210 provides a ligand contact to Fe(3+). Positions 279 and 451 each coordinate Fe(3+). Serine 462 is subject to Phosphoserine. Residue asparagine 515 is glycosylated (N-linked (GlcNAc...) asparagine). Positions 556 and 625 each coordinate Fe(3+). Cysteine 709 is lipidated: GPI-anchor amidated cysteine. The propeptide at 710 to 738 is removed in mature form; the sequence is SGAGAAVQRVPLLALLLLTLAAGLLPRVL.

The protein belongs to the transferrin family.

It localises to the cell membrane. In terms of biological role, involved in iron cellular uptake. Seems to be internalized and then recycled back to the cell membrane. Binds a single atom of iron per subunit. Could also bind zinc. The polypeptide is Melanotransferrin (Meltf) (Mus musculus (Mouse)).